The following is a 153-amino-acid chain: Ribosome maturation factor RimP (153 aa).

The protein belongs to the RimP family.

It localises to the cytoplasm. Its function is as follows. Required for maturation of 30S ribosomal subunits. The chain is Ribosome maturation factor RimP from Burkholderia mallei (strain NCTC 10229).